A 95-amino-acid chain; its full sequence is Small ribosomal subunit protein bS6 (95 aa).

Belongs to the bacterial ribosomal protein bS6 family.

Its function is as follows. Binds together with bS18 to 16S ribosomal RNA. The chain is Small ribosomal subunit protein bS6 from Rhodococcus jostii (strain RHA1).